We begin with the raw amino-acid sequence, 411 residues long: Arginine deiminase (411 aa).

Catalysis depends on cysteine 401, which acts as the Amidino-cysteine intermediate.

This sequence belongs to the arginine deiminase family.

It is found in the cytoplasm. The catalysed reaction is L-arginine + H2O = L-citrulline + NH4(+). It participates in amino-acid degradation; L-arginine degradation via ADI pathway; carbamoyl phosphate from L-arginine: step 1/2. This chain is Arginine deiminase, found in Streptococcus equi subsp. zooepidemicus (strain H70).